Reading from the N-terminus, the 138-residue chain is Acidic phospholipase A2 Drk-a1 (138 aa).

A signal peptide spans 1–16 (MRTLWIVAVCLIGVEG). Intrachain disulfides connect Cys42-Cys131, Cys44-Cys60, Cys59-Cys111, Cys65-Cys138, Cys66-Cys104, Cys73-Cys97, and Cys91-Cys102. 3 residues coordinate Ca(2+): Tyr43, Gly45, and Gly47. Residue His63 is part of the active site. Position 64 (Asp64) interacts with Ca(2+). Asp105 is a catalytic residue.

It belongs to the phospholipase A2 family. Group II subfamily. D49 sub-subfamily. Ca(2+) serves as cofactor. In terms of tissue distribution, expressed by the venom gland.

The protein localises to the secreted. It catalyses the reaction a 1,2-diacyl-sn-glycero-3-phosphocholine + H2O = a 1-acyl-sn-glycero-3-phosphocholine + a fatty acid + H(+). Snake venom phospholipase A2 (PLA2) that exhibits high hydrolytic activities and shows strong preference for the anionic micelles (dPPC with deoxycholate) to the zwitterionic micelles (dPPC with Triton X-100). PLA2 catalyzes the calcium-dependent hydrolysis of the 2-acyl groups in 3-sn-phosphoglycerides. In Daboia russelii (Russel's viper), this protein is Acidic phospholipase A2 Drk-a1.